We begin with the raw amino-acid sequence, 204 residues long: Thymidylate kinase (204 aa).

11-18 (GLDKSGKT) is a binding site for ATP.

This sequence belongs to the thymidylate kinase family.

It carries out the reaction dTMP + ATP = dTDP + ADP. It functions in the pathway pyrimidine metabolism; dTTP biosynthesis. This chain is Thymidylate kinase (TMK), found in Rabbitpox virus (strain Utrecht) (RPV).